The following is a 276-amino-acid chain: Acyl-[acyl-carrier-protein]--UDP-N-acetylglucosamine O-acyltransferase (276 aa).

Belongs to the transferase hexapeptide repeat family. LpxA subfamily. Homotrimer.

Its subcellular location is the cytoplasm. It catalyses the reaction a (3R)-hydroxyacyl-[ACP] + UDP-N-acetyl-alpha-D-glucosamine = a UDP-3-O-[(3R)-3-hydroxyacyl]-N-acetyl-alpha-D-glucosamine + holo-[ACP]. The protein operates within glycolipid biosynthesis; lipid IV(A) biosynthesis; lipid IV(A) from (3R)-3-hydroxytetradecanoyl-[acyl-carrier-protein] and UDP-N-acetyl-alpha-D-glucosamine: step 1/6. Functionally, involved in the biosynthesis of lipid A, a phosphorylated glycolipid that anchors the lipopolysaccharide to the outer membrane of the cell. The sequence is that of Acyl-[acyl-carrier-protein]--UDP-N-acetylglucosamine O-acyltransferase from Rippkaea orientalis (strain PCC 8801 / RF-1) (Cyanothece sp. (strain PCC 8801)).